An 867-amino-acid polypeptide reads, in one-letter code: Xylosyltransferase 2 (867 aa).

Residues 1 to 15 lie on the Cytoplasmic side of the membrane; that stretch reads MVASARVQKLVRRYK. The chain crosses the membrane as a helical; Signal-anchor for type II membrane protein span at residues 16-36; that stretch reads LAIATALAILLLQGLVVWSFS. Over 37-867 the chain is Lumenal; it reads VLEDDEPGEK…GPVKADGRLR (831 aa). The interval 41–122 is disordered; that stretch reads DEPGEKGRQK…PPPEAPGRQN (82 aa). The segment covering 53–65 has biased composition (basic and acidic residues); that stretch reads RPLDPSEGSKDTD. Residues 73–82 are compositionally biased toward basic residues; the sequence is SAGRRHGRWR. A glycan (N-linked (GlcNAc...) asparagine) is linked at asparagine 122. Disulfide bonds link cysteine 161–cysteine 189 and cysteine 205–cysteine 447. UDP-alpha-D-xylose contacts are provided by residues valine 238, aspartate 266, and 295–297; that span reads TIW. N-linked (GlcNAc...) asparagine glycosylation occurs at asparagine 326. UDP-alpha-D-xylose contacts are provided by residues 399–400, serine 480, and 503–504; these read DW and RK. Intrachain disulfides connect cysteine 580–cysteine 835 and cysteine 828–cysteine 841. Residue asparagine 685 is glycosylated (N-linked (GlcNAc...) asparagine).

The protein belongs to the glycosyltransferase 14 family. XylT subfamily. Monomer. The cofactor is Mg(2+). Requires Mn(2+) as cofactor. In terms of processing, contains disulfide bonds.

Its subcellular location is the golgi apparatus membrane. It localises to the secreted. The enzyme catalyses UDP-alpha-D-xylose + L-seryl-[protein] = 3-O-(beta-D-xylosyl)-L-seryl-[protein] + UDP + H(+). It functions in the pathway glycan metabolism; chondroitin sulfate biosynthesis. It participates in glycan metabolism; heparan sulfate biosynthesis. Its function is as follows. Catalyzes the first step in the biosynthesis of chondroitin sulfate, heparan sulfate and dermatan sulfate proteoglycans, such as DCN. Transfers D-xylose from UDP-D-xylose to specific serine residues of the core protein. The sequence is that of Xylosyltransferase 2 (XYLT2) from Bos taurus (Bovine).